The chain runs to 600 residues: Alpha pinene synthase, chloroplastic (600 aa).

Residues 1-26 (MSSISMHARPLNISAANNHHPSWDRR) are disordered. A chloroplast-targeting transit peptide spans 1 to 31 (MSSISMHARPLNISAANNHHPSWDRRVSKPR). 4 residues coordinate Mg(2+): D354, D358, D498, and E506. The DDXXD motif motif lies at 354–358 (DDVYD).

It belongs to the terpene synthase family. Tpsa subfamily. Requires Mg(2+) as cofactor. The cofactor is Mn(2+). Barely detectable in leaves.

It is found in the plastid. The protein resides in the chloroplast. It catalyses the reaction (2E)-geranyl diphosphate = alpha-pinene + diphosphate. The protein operates within secondary metabolite biosynthesis; terpenoid biosynthesis. In terms of biological role, monoterpene synthase involved in the biosynthesis of volatile compounds widely used in aromatherapy and folk medicine, and present in culinary herbs. Mediates the conversion of (2E)-geranyl diphosphate (GPP) into alpha-pinene and, as minor compounds, into alpha-phellandrene, limonene and alpha-terpinolene. This Lavandula stoechas (Butterfly lavender) protein is Alpha pinene synthase, chloroplastic.